The primary structure comprises 210 residues: Rho-related GTP-binding protein RhoD (210 aa).

24–31 (GDGGCGKT) lines the GTP pocket. Residues 46-54 (YSPTVFERY) carry the Effector region motif. GTP-binding positions include 71–75 (DTAGQ) and 129–132 (CKID). Cysteine 207 is subject to Cysteine methyl ester. Cysteine 207 carries the S-geranylgeranyl cysteine lipid modification. A propeptide spans 208-210 (LAT) (removed in mature form).

It belongs to the small GTPase superfamily. Rho family. Interacts with PAK5. Interacts (in GTP-bound form) with DAPK3, FILIP1 and WHAMM. Interacts (independent of GTP-loaded status) with ANKFY1. In terms of tissue distribution, widely expressed.

The protein resides in the cell membrane. Its subcellular location is the early endosome. Its function is as follows. Involved in endosome dynamics. May coordinate membrane transport with the function of the cytoskeleton. Involved in the internalization and trafficking of activated tyrosine kinase receptors such as PDGFRB. Participates in the reorganization of actin cytoskeleton; the function seems to involve WHAMM and includes regulation of filopodia formation and actin filament bundling. Can modulate the effect of DAPK3 in reorganization of actin cytoskeleton and focal adhesion dissolution. This chain is Rho-related GTP-binding protein RhoD (Rhod), found in Mus musculus (Mouse).